The sequence spans 228 residues: 2-C-methyl-D-erythritol 4-phosphate cytidylyltransferase (228 aa).

It belongs to the IspD/TarI cytidylyltransferase family. IspD subfamily.

The catalysed reaction is 2-C-methyl-D-erythritol 4-phosphate + CTP + H(+) = 4-CDP-2-C-methyl-D-erythritol + diphosphate. It participates in isoprenoid biosynthesis; isopentenyl diphosphate biosynthesis via DXP pathway; isopentenyl diphosphate from 1-deoxy-D-xylulose 5-phosphate: step 2/6. Functionally, catalyzes the formation of 4-diphosphocytidyl-2-C-methyl-D-erythritol from CTP and 2-C-methyl-D-erythritol 4-phosphate (MEP). The chain is 2-C-methyl-D-erythritol 4-phosphate cytidylyltransferase from Trichormus variabilis (strain ATCC 29413 / PCC 7937) (Anabaena variabilis).